Consider the following 341-residue polypeptide: Ferrochelatase (341 aa).

The Fe cation site is built by His-189 and Glu-293.

It belongs to the ferrochelatase family.

The protein resides in the cytoplasm. It catalyses the reaction heme b + 2 H(+) = protoporphyrin IX + Fe(2+). It functions in the pathway porphyrin-containing compound metabolism; protoheme biosynthesis; protoheme from protoporphyrin-IX: step 1/1. Its function is as follows. Catalyzes the ferrous insertion into protoporphyrin IX. This chain is Ferrochelatase, found in Pseudomonas fluorescens (strain SBW25).